A 633-amino-acid polypeptide reads, in one-letter code: Putative ankyrin repeat protein L774 (633 aa).

7 ANK repeats span residues 91–120 (IYGH…EYDP), 123–152 (NCDD…FFKI), 221–250 (NVNK…EYDF), 252–275 (TILK…ILDS), 338–367 (DYDV…DVNN), 369–393 (MTYA…TLST), and 517–546 (DNLK…NSND).

The sequence is that of Putative ankyrin repeat protein L774 from Acanthamoeba polyphaga mimivirus (APMV).